The sequence spans 164 residues: Phosphopantetheine adenylyltransferase (164 aa).

Substrate is bound at residue Ser9. Residues Ser9–Phe10 and His17 each bind ATP. Substrate contacts are provided by Lys41, Val78, and Arg92. ATP contacts are provided by residues Gly93–Arg95, Glu103, and Val128–Thr134.

The protein belongs to the bacterial CoaD family. In terms of assembly, homohexamer. It depends on Mg(2+) as a cofactor.

It localises to the cytoplasm. The catalysed reaction is (R)-4'-phosphopantetheine + ATP + H(+) = 3'-dephospho-CoA + diphosphate. It functions in the pathway cofactor biosynthesis; coenzyme A biosynthesis; CoA from (R)-pantothenate: step 4/5. Its function is as follows. Reversibly transfers an adenylyl group from ATP to 4'-phosphopantetheine, yielding dephospho-CoA (dPCoA) and pyrophosphate. The sequence is that of Phosphopantetheine adenylyltransferase from Brucella anthropi (strain ATCC 49188 / DSM 6882 / CCUG 24695 / JCM 21032 / LMG 3331 / NBRC 15819 / NCTC 12168 / Alc 37) (Ochrobactrum anthropi).